The sequence spans 433 residues: Adenosylhomocysteinase B (433 aa).

5 residues coordinate substrate: Thr-57, Asp-132, Glu-157, Lys-187, and Asp-191. Positions 184-351 are NAD binding; sequence SVTKSKFDNL…EGRLVNLGCA (168 aa).

Belongs to the adenosylhomocysteinase family. As to quaternary structure, homotetramer. NAD(+) serves as cofactor.

It localises to the cytoplasm. It catalyses the reaction S-adenosyl-L-homocysteine + H2O = L-homocysteine + adenosine. It functions in the pathway amino-acid biosynthesis; L-homocysteine biosynthesis; L-homocysteine from S-adenosyl-L-homocysteine: step 1/1. Functionally, catalyzes the hydrolysis of S-adenosyl-L-homocysteine to form adenosine and homocysteine. Binds copper ions. The polypeptide is Adenosylhomocysteinase B (ahcy-b) (Xenopus laevis (African clawed frog)).